The sequence spans 406 residues: Arginine deiminase (406 aa).

Residue cysteine 396 is the Amidino-cysteine intermediate of the active site.

It belongs to the arginine deiminase family.

The protein resides in the cytoplasm. It catalyses the reaction L-arginine + H2O = L-citrulline + NH4(+). It functions in the pathway amino-acid degradation; L-arginine degradation via ADI pathway; carbamoyl phosphate from L-arginine: step 1/2. The sequence is that of Arginine deiminase from Vibrio campbellii (strain ATCC BAA-1116).